Here is a 358-residue protein sequence, read N- to C-terminus: DNA polymerase IV (358 aa).

Positions 4–185 (IIHVDMDCFY…LPLIKIPGVG (182 aa)) constitute a UmuC domain. Residues aspartate 8 and aspartate 103 each contribute to the Mg(2+) site. The active site involves glutamate 104.

The protein belongs to the DNA polymerase type-Y family. In terms of assembly, monomer. The cofactor is Mg(2+).

It localises to the cytoplasm. It catalyses the reaction DNA(n) + a 2'-deoxyribonucleoside 5'-triphosphate = DNA(n+1) + diphosphate. In terms of biological role, poorly processive, error-prone DNA polymerase involved in untargeted mutagenesis. Copies undamaged DNA at stalled replication forks, which arise in vivo from mismatched or misaligned primer ends. These misaligned primers can be extended by PolIV. Exhibits no 3'-5' exonuclease (proofreading) activity. May be involved in translesional synthesis, in conjunction with the beta clamp from PolIII. This is DNA polymerase IV from Shewanella pealeana (strain ATCC 700345 / ANG-SQ1).